The primary structure comprises 428 residues: RF4 protein (428 aa).

3 N-linked (GlcNAc...) asparagine glycosylation sites follow: N8, N205, and N344.

Its function is as follows. Not known. This Kluyveromyces lactis (strain ATCC 8585 / CBS 2359 / DSM 70799 / NBRC 1267 / NRRL Y-1140 / WM37) (Yeast) protein is RF4 protein (RF4).